We begin with the raw amino-acid sequence, 311 residues long: Ribosomal RNA small subunit methyltransferase H (311 aa).

S-adenosyl-L-methionine contacts are provided by residues 34–36 (GGY), aspartate 51, phenylalanine 75, aspartate 93, and glutamine 100.

The protein belongs to the methyltransferase superfamily. RsmH family.

It localises to the cytoplasm. The catalysed reaction is cytidine(1402) in 16S rRNA + S-adenosyl-L-methionine = N(4)-methylcytidine(1402) in 16S rRNA + S-adenosyl-L-homocysteine + H(+). Its function is as follows. Specifically methylates the N4 position of cytidine in position 1402 (C1402) of 16S rRNA. The polypeptide is Ribosomal RNA small subunit methyltransferase H (Caulobacter vibrioides (strain ATCC 19089 / CIP 103742 / CB 15) (Caulobacter crescentus)).